Reading from the N-terminus, the 127-residue chain is Small ribosomal subunit protein uS11 (127 aa).

The protein belongs to the universal ribosomal protein uS11 family. Part of the 30S ribosomal subunit. Interacts with proteins S7 and S18. Binds to IF-3.

In terms of biological role, located on the platform of the 30S subunit, it bridges several disparate RNA helices of the 16S rRNA. Forms part of the Shine-Dalgarno cleft in the 70S ribosome. The polypeptide is Small ribosomal subunit protein uS11 (Rickettsia rickettsii (strain Iowa)).